The primary structure comprises 247 residues: Particulate methane monooxygenase beta subunit (247 aa).

6 helical membrane-spanning segments follow: residues 23 to 43, 59 to 79, 86 to 106, 111 to 131, 145 to 165, and 215 to 235; these read WMALFVVFFVIVGSYHIHAML, LWVTVTPIVLVTFPAAVQSYL, PWGATVCVLGLLLGEWINRYF, WTYFPINFVFPASLVPGAIIL, AIVGAMGWGLIFYPGNWPIIA, and VSAFFSAFMSILIYFMWHFIG.

As to quaternary structure, m.capsulatus has two forms of methane monooxygenase, a soluble (sMMO) and a membrane-bound (particulate) type (pMMO). The particulate type is a nonamer composed of three alpha:beta:gamma heterotrimeric protomers assembled into a cylindrical structure; the beta and gamma subunits comprise the bulk of the membrane-spanning regions and the soluble regions are derived primarily from alpha subunits which form two antiparallel beta-barrel-like structures each. This assembly, also called pMMO hydroxylase (pMMO-H), is proposed to associate with methanol dehydrogenase (MDH), also designated as pMMO-R, to form the pMMO-C complex which seems to have greater methane monooxygenase activity.

The protein localises to the membrane. It carries out the reaction methane + a quinol + O2 = methanol + a quinone + H2O. Non-catalytic subunit of the methane monooxygenase that is responsible for the initial oxygenation of methane to methanol in methanotrophs. At least in vitro, specific quinols can replace NADH as reductants. The sequence is that of Particulate methane monooxygenase beta subunit (pmoA1) from Methylococcus capsulatus (strain ATCC 33009 / NCIMB 11132 / Bath).